The following is a 400-amino-acid chain: LIM/homeobox protein Lhx3 (400 aa).

2 consecutive LIM zinc-binding domains span residues 34-84 (CAGC…CKDD) and 93-147 (CAAC…CKAD). The residue at position 74 (S74) is a Phosphoserine. A DNA-binding region (homeobox) is located at residues 160-219 (AKRPRTTITAKQLETLKSAYNTSPKPARHVREQLSSETGLDMRVVQVWFQNRRAKEKRLK). Disordered regions lie at residues 215-280 (EKRL…SSLG) and 297-400 (TLDH…HAQF). Y230 carries the post-translational modification Phosphotyrosine. S237 and S241 each carry phosphoserine. Composition is skewed to pro residues over residues 319–334 (GIPPSPAAPQSLPGPQ) and 352–361 (SGPPGGPPPM). Polar residues predominate over residues 368 to 380 (GPSSDLSTESSSG).

In terms of assembly, interacts with POU1F1. At neuronal promoters, interacts with LDB1, in motor neurons LDB1 is displaced by ISL1 and a ternary complex is formed in which ISL1 contacts both LHX3 and LDB1; allosteric structural changes in the DNA binding domain of LHX3, induced by the ISL1-LHX3 interaction, may explain differences in sequence specificity of the different complexes. Interacts with LDB2. May interact with CITED2/MRG1. As to expression, mostly expressed in the pituitary anterior and intermediate lobes. It is also expressed in the pineal gland and transiently in the primordia of motor neurons including the spinal cord, pons and medulla oblongata.

The protein localises to the nucleus. In terms of biological role, transcription factor. Recognizes and binds to the consensus sequence motif 5'-AATTAATTA-3' in the regulatory elements of target genes, such as glycoprotein hormones alpha chain CGA and visual system homeobox CHX10, positively modulating transcription; transcription can be co-activated by LDB2. Synergistically enhances transcription from the prolactin promoter in cooperation with POU1F1/Pit-1. Required for the establishment of the specialized cells of the pituitary gland and the nervous system. Involved in the development of interneurons and motor neurons in cooperation with LDB1 and ISL1. The polypeptide is LIM/homeobox protein Lhx3 (Lhx3) (Mus musculus (Mouse)).